The chain runs to 200 residues: MRRNALELEVFAGQEKSELSMIEVARAILELRGRDHEMHFSDLVNEIQNYLGTSNSDIREALPLFYTELNFDGSFISLGDNKWGLRSWYGVDEIDEEIIALEENDDDEVAPKAKKKRVNAFMDGDSDAIDYNADDPEDEDAYEADPALSYDDENPDDEKNEVEAYDAEINEIAPDDLGEDVDLNEDDDEFSDDDAETSEE.

One can recognise an HTH HARE-type domain in the interval 19-88 (LSMIEVARAI…GDNKWGLRSW (70 aa)). Acidic residues-rich tracts occupy residues 125-143 (DSDA…DAYE) and 150-200 (YDDE…TSEE). The tract at residues 125–200 (DSDAIDYNAD…SDDDAETSEE (76 aa)) is disordered.

It belongs to the RpoE family. RNAP is composed of a core of 2 alpha, a beta and a beta' subunits. The core is associated with a delta subunit and one of several sigma factors.

In terms of biological role, participates in both the initiation and recycling phases of transcription. In the presence of the delta subunit, RNAP displays an increased specificity of transcription, a decreased affinity for nucleic acids, and an increased efficiency of RNA synthesis because of enhanced recycling. In Streptococcus pneumoniae serotype 4 (strain ATCC BAA-334 / TIGR4), this protein is Probable DNA-directed RNA polymerase subunit delta.